The primary structure comprises 238 residues: uncharacterized protein (238 aa).

The next 4 membrane-spanning stretches (helical) occupy residues 16–36, 44–64, 81–101, and 123–143; these read HLII…IGLE, VGVK…IVSI, PMRL…GVIL, and IGIA…VMIL.

Belongs to the MgtC/SapB family.

It localises to the cell inner membrane. This is an uncharacterized protein from Haemophilus influenzae (strain ATCC 51907 / DSM 11121 / KW20 / Rd).